A 1181-amino-acid polypeptide reads, in one-letter code: WD repeat-containing protein 35 (1181 aa).

WD repeat units follow at residues 12–51 (PNNV…DDSK), 69–108 (GHSG…WYEE), 113–152 (RNKS…IWGK), 154–193 (LKGI…IMKM), and 502–539 (GTRD…LIQK).

As to quaternary structure, component of the IFT complex A (IFT-A) complex. IFT-A complex is divided into a core subcomplex composed of IFT122:IFT140:WDR19 which is associated with TULP3 and a peripheral subcomplex composed of IFT43:WDR35:TTC21B. Interacts directy with IFT122, ITF43 and TTC21B. Interacts with IFT43. Interacts with CFAP61.

The protein localises to the cytoplasm. It is found in the cytoskeleton. It localises to the microtubule organizing center. The protein resides in the centrosome. Its subcellular location is the cilium axoneme. The protein localises to the cilium basal body. Its function is as follows. As a component of the IFT complex A (IFT-A), a complex required for retrograde ciliary transport and entry into cilia of G protein-coupled receptors (GPCRs), it is involved in ciliogenesis and ciliary protein trafficking. May promote CASP3 activation and TNF-stimulated apoptosis. The sequence is that of WD repeat-containing protein 35 from Mus musculus (Mouse).